The primary structure comprises 1060 residues: DNA-directed RNA polymerase subunit beta (1060 aa).

The protein belongs to the RNA polymerase beta chain family. As to quaternary structure, in plastids the minimal PEP RNA polymerase catalytic core is composed of four subunits: alpha, beta, beta', and beta''. When a (nuclear-encoded) sigma factor is associated with the core the holoenzyme is formed, which can initiate transcription.

Its subcellular location is the plastid. It localises to the chloroplast. The catalysed reaction is RNA(n) + a ribonucleoside 5'-triphosphate = RNA(n+1) + diphosphate. DNA-dependent RNA polymerase catalyzes the transcription of DNA into RNA using the four ribonucleoside triphosphates as substrates. This is DNA-directed RNA polymerase subunit beta from Helianthus annuus (Common sunflower).